The primary structure comprises 403 residues: MATSPAVIDVETIRKAQRAEGPATILAIGTATPANCVYQADYPDYYFRVTESEHMVDLKEKFQRMCDKSMIRKRYMHITEEFLKENPSMCKFMAPSLDARQDLVVVEVPKLGKEAATKAIKEWGFPKSKITHLVFCTTSGVDMPGADYQLTKLLGLRPSVKRLMMYQQGCFAGGTVLRLAKDLAENNKGARVLVVCSEITAVTFRGPNEGHLDSLVGQALFGDGAAAVIIGSDPDLSVERPLFEMVSAAQTILPDSEGAIDGHLKEVGLTFHLLKDVPALIAKNIEKALIQAFSPLNINDWNSIFWIAHPGGPAILDQVEFKLGLREEKLRASRHVLSEYGNMSSACVLFILDEMRKKSIKDGKTTTGEGLEWGVLFGFGPGLTVETVVLHSLPATISVATQN.

Cys-170 is an active-site residue.

This sequence belongs to the thiolase-like superfamily. Chalcone/stilbene synthases family.

The catalysed reaction is (E)-4-coumaroyl-CoA + 3 malonyl-CoA + 3 H(+) = 2',4,4',6'-tetrahydroxychalcone + 3 CO2 + 4 CoA. The protein operates within secondary metabolite biosynthesis; flavonoid biosynthesis. The primary product of this enzyme is 4,2',4',6'-tetrahydroxychalcone (also termed naringenin-chalcone or chalcone) which can under specific conditions spontaneously isomerize into naringenin. This is Chalcone synthase 3 (CHS3) from Gerbera hybrida (Daisy).